An 80-amino-acid polypeptide reads, in one-letter code: Conotoxin Cl9.5 (80 aa).

The N-terminal stretch at 1 to 23 (MNCYLILTVALLLTSAMTGTTTA) is a signal peptide. The propeptide occupies 24 to 37 (GQLNTKGVTLREDD). Intrachain disulfides connect Cys-42–Cys-59, Cys-47–Cys-69, and Cys-49–Cys-74.

Expressed by the venom duct.

It localises to the secreted. This is Conotoxin Cl9.5 from Californiconus californicus (California cone).